The sequence spans 199 residues: Holliday junction branch migration complex subunit RuvA (199 aa).

A domain I region spans residues 1 to 64 (MIGRITGILL…EDGHFLYGFA (64 aa)). A domain II region spans residues 65 to 143 (SADERAAFRQ…RALPGFGAST (79 aa)). The interval 144-152 (VPGAAAQPA) is flexible linker. A domain III region spans residues 152-199 (ADSRSDILNALLALGYSDKEAQSALKAIPPETGVSDGIRQALKLLSKA).

Belongs to the RuvA family. Homotetramer. Forms an RuvA(8)-RuvB(12)-Holliday junction (HJ) complex. HJ DNA is sandwiched between 2 RuvA tetramers; dsDNA enters through RuvA and exits via RuvB. An RuvB hexamer assembles on each DNA strand where it exits the tetramer. Each RuvB hexamer is contacted by two RuvA subunits (via domain III) on 2 adjacent RuvB subunits; this complex drives branch migration. In the full resolvosome a probable DNA-RuvA(4)-RuvB(12)-RuvC(2) complex forms which resolves the HJ.

It localises to the cytoplasm. In terms of biological role, the RuvA-RuvB-RuvC complex processes Holliday junction (HJ) DNA during genetic recombination and DNA repair, while the RuvA-RuvB complex plays an important role in the rescue of blocked DNA replication forks via replication fork reversal (RFR). RuvA specifically binds to HJ cruciform DNA, conferring on it an open structure. The RuvB hexamer acts as an ATP-dependent pump, pulling dsDNA into and through the RuvAB complex. HJ branch migration allows RuvC to scan DNA until it finds its consensus sequence, where it cleaves and resolves the cruciform DNA. This is Holliday junction branch migration complex subunit RuvA from Aromatoleum aromaticum (strain DSM 19018 / LMG 30748 / EbN1) (Azoarcus sp. (strain EbN1)).